The chain runs to 151 residues: Caveolin-3 (151 aa).

At 1-83 (MMAEERTDLE…RLLSTLLGVP (83 aa)) the chain is on the cytoplasmic side. Residue lysine 38 forms a Glycyl lysine isopeptide (Lys-Gly) (interchain with G-Cter in SUMO3) linkage. The required for interaction with DAG1 stretch occupies residues 64 to 114 (TFTVSKYWCYRLLSTLLGVPLALLWGFLFACISFCHIWAVVPCIKSYLIEI). Residues 84–104 (LALLWGFLFACISFCHIWAVV) constitute an intramembrane region (helical). Residues 105–151 (PCIKSYLIEIQCISHIYSLCIRTFCNPVFAALGQVCSNIKVMLRKEV) lie on the Cytoplasmic side of the membrane.

This sequence belongs to the caveolin family. As to quaternary structure, homooligomer. Interacts with DYSF. Interacts with DLG1 and KCNA5; forms a ternary complex. Interacts with DAG1 (via its C-terminal); the interaction prevents binding of DAG1 with DMD. Interacts with TRIM72. Interacts with MUSK; may regulate MUSK signaling. Interacts with POPDC1. Interacts with CAVIN1, CAVIN2 and CAVIN4. In terms of processing, sumoylation with SUMO3 by PIAS4 may reduce agonist-induced internalization and desensitization of adrenergic receptor ABRD2. In terms of tissue distribution, expressed specifically in skeletal muscle and heart.

It is found in the golgi apparatus membrane. Its subcellular location is the cell membrane. It localises to the membrane. The protein resides in the caveola. The protein localises to the sarcolemma. Its function is as follows. May act as a scaffolding protein within caveolar membranes. Interacts directly with G-protein alpha subunits and can functionally regulate their activity. May also regulate voltage-gated potassium channels. Plays a role in the sarcolemma repair mechanism of both skeletal muscle and cardiomyocytes that permits rapid resealing of membranes disrupted by mechanical stress. Mediates the recruitment of CAVIN2 and CAVIN3 proteins to the caveolae. This chain is Caveolin-3 (CAV3), found in Sus scrofa (Pig).